A 377-amino-acid polypeptide reads, in one-letter code: 23S rRNA (uracil(747)-C(5))-methyltransferase RlmC (377 aa).

4 residues coordinate [4Fe-4S] cluster: C3, C11, C14, and C87. 4 residues coordinate S-adenosyl-L-methionine: Q212, F241, E262, and N307. Residue C334 is the Nucleophile of the active site.

It belongs to the class I-like SAM-binding methyltransferase superfamily. RNA M5U methyltransferase family. RlmC subfamily.

The catalysed reaction is uridine(747) in 23S rRNA + S-adenosyl-L-methionine = 5-methyluridine(747) in 23S rRNA + S-adenosyl-L-homocysteine + H(+). Catalyzes the formation of 5-methyl-uridine at position 747 (m5U747) in 23S rRNA. The sequence is that of 23S rRNA (uracil(747)-C(5))-methyltransferase RlmC from Photorhabdus laumondii subsp. laumondii (strain DSM 15139 / CIP 105565 / TT01) (Photorhabdus luminescens subsp. laumondii).